The sequence spans 158 residues: Protein-export protein SecB (158 aa).

The protein belongs to the SecB family. As to quaternary structure, homotetramer, a dimer of dimers. One homotetramer interacts with 1 SecA dimer.

It localises to the cytoplasm. In terms of biological role, one of the proteins required for the normal export of preproteins out of the cell cytoplasm. It is a molecular chaperone that binds to a subset of precursor proteins, maintaining them in a translocation-competent state. It also specifically binds to its receptor SecA. The polypeptide is Protein-export protein SecB (Bartonella quintana (strain Toulouse) (Rochalimaea quintana)).